We begin with the raw amino-acid sequence, 572 residues long: Chaperonin CPN60-like 2, mitochondrial (572 aa).

A mitochondrion-targeting transit peptide spans 1-31 (MYRVLSKLSSSIGSSTSRKLVSGRIISSRNY).

It belongs to the chaperonin (HSP60) family.

It is found in the mitochondrion. Its function is as follows. Implicated in mitochondrial protein import and macromolecular assembly. May facilitate the correct folding of imported proteins. May also prevent misfolding and promote the refolding and proper assembly of unfolded polypeptides generated under stress conditions in the mitochondrial matrix. This is Chaperonin CPN60-like 2, mitochondrial from Arabidopsis thaliana (Mouse-ear cress).